The following is a 103-amino-acid chain: uncharacterized protein (103 aa).

This is an uncharacterized protein from Homo sapiens (Human).